A 501-amino-acid polypeptide reads, in one-letter code: Iroquois-class homeodomain protein IRX-3 (501 aa).

The homeobox; TALE-type DNA-binding region spans 125–188 (FGDPSRPKNA…ANARRRLKKE (64 aa)). The interval 190–381 (KMTWAPRSRT…SPPGAAVAPS (192 aa)) is disordered. 2 stretches are compositionally biased toward acidic residues: residues 210–220 (REEEDEEEDEE) and 227–258 (ELEEEELGGEEEDTGGEGLADDDEDEEIDLEN). Phosphoserine is present on residues Ser323 and Ser326. Residues 324–339 (LPSPPVSLDPCAPAPA) are compositionally biased toward pro residues.

The protein belongs to the TALE/IRO homeobox family.

Its subcellular location is the nucleus. Its function is as follows. Transcription factor involved in SHH-dependent neural patterning. Together with NKX2-2 and NKX6-1 acts to restrict the generation of motor neurons to the appropriate region of the neural tube. Belongs to the class I proteins of neuronal progenitor factors, which are repressed by SHH signals. Involved in the transcriptional repression of MNX1 in non-motor neuron cells. Acts as a regulator of energy metabolism. In Homo sapiens (Human), this protein is Iroquois-class homeodomain protein IRX-3 (IRX3).